A 179-amino-acid chain; its full sequence is Chymotrypsin inhibitor ECI (179 aa).

At glutamine 1 the chain carries Pyrrolidone carboxylic acid. 2 disulfide bridges follow: cysteine 40/cysteine 84 and cysteine 134/cysteine 143.

The protein belongs to the protease inhibitor I3 (leguminous Kunitz-type inhibitor) family.

Inhibition of chymotrypsin. The protein is Chymotrypsin inhibitor ECI of Erythrina variegata (Indian coral tree).